The chain runs to 188 residues: Deoxycytidylate deaminase (188 aa).

Residues Met-1–Val-171 enclose the CMP/dCMP-type deaminase domain. Positions 19, 49, 94, 102, and 104 each coordinate Zn(2+). Residue Glu-106 is the Proton donor of the active site. Positions 132 and 135 each coordinate Zn(2+).

This sequence belongs to the cytidine and deoxycytidylate deaminase family. In terms of assembly, homohexamer. Zn(2+) serves as cofactor.

The enzyme catalyses dCMP + H2O + H(+) = dUMP + NH4(+). With respect to regulation, allosteric enzyme whose activity is greatly influenced by the end products of its metabolic pathway, dCTP and dTTP. Supplies the nucleotide substrate for thymidylate synthetase. The polypeptide is Deoxycytidylate deaminase (CD) (Enterobacteria phage T2 (Bacteriophage T2)).